Consider the following 453-residue polypeptide: GTPase Der (453 aa).

EngA-type G domains follow at residues 3-167 and 188-361; these read PIIV…INSK and VKIA…HTSQ. GTP-binding positions include 9 to 16, 57 to 61, 119 to 122, 194 to 201, 241 to 245, and 306 to 309; these read GRTNVGKS, DTAGI, NKID, GKPNVGKS, DTAGM, and NKCD. One can recognise a KH-like domain in the interval 362–446; that stretch reads KKIKTSQVMK…PIKIQFKETM (85 aa).

Belongs to the TRAFAC class TrmE-Era-EngA-EngB-Septin-like GTPase superfamily. EngA (Der) GTPase family. As to quaternary structure, associates with the 50S ribosomal subunit.

GTPase that plays an essential role in the late steps of ribosome biogenesis. This chain is GTPase Der, found in Buchnera aphidicola subsp. Schizaphis graminum (strain Sg).